Here is a 2158-residue protein sequence, read N- to C-terminus: RNA1 polyprotein (2158 aa).

Residues 1-105 constitute a propeptide, removed in mature form; sequence MSFSKMFPGF…VASMYKSICD (105 aa). The region spanning 367 to 534 is the SF3 helicase domain; sequence DKIYGENCQH…GEFNTDAPTS (168 aa). Residue 393–400 coordinates ATP; that stretch reads GASGCGKS. Residues 801–821 form a helical membrane-spanning segment; it reads GLILIALNGAFGAVTAFCACW. At S844 the chain carries O-(5'-phospho-RNA)-serine. The Peptidase C3 domain maps to 870-1083; it reads ASDDGFINEG…FVASNATAIF (214 aa). Residues H910, D946, and C1041 each act as for picornain 3C-like protease activity in the active site. One can recognise a RdRp catalytic domain in the interval 1376-1511; that stretch reads DTGFSADYSS…AVPMELHWYT (136 aa).

Its subcellular location is the host membrane. The enzyme catalyses RNA(n) + a ribonucleoside 5'-triphosphate = RNA(n+1) + diphosphate. Its function is as follows. Picornain 3C-like protease is a thiol protease that probably cleaves the polyprotein. The chain is RNA1 polyprotein from Capsicum annuum (Capsicum pepper).